A 687-amino-acid polypeptide reads, in one-letter code: Ferric vulnibactin receptor VuuA (687 aa).

Residues 1 to 37 (MAALRPARTSVAEKKTFKLHALSAVVMGLCASGQAYA) form the signal peptide. The TBDR plug domain occupies 63–185 (TIYDTSSSVQ…SAGAIVMKTN (123 aa)). One can recognise a TBDR beta-barrel domain in the interval 190-687 (HFESAVKAGV…MIGASLQLNF (498 aa)). A TonB C-terminal box motif is present at residues 670–687 (EPLKQQPRMIGASLQLNF).

This sequence belongs to the TonB-dependent receptor family.

It is found in the cell outer membrane. Involved in the uptake of iron in complex with vulnibactin, a catecholate siderophore synthesized by V.vulnificus. Binds and transports ferric vulnibactin across the outer membrane. The energy source is provided by the inner membrane TonB system. This Vibrio vulnificus protein is Ferric vulnibactin receptor VuuA.